The following is a 430-amino-acid chain: Functional amyloid transporter FapF (430 aa).

A signal peptide spans 1–24; that stretch reads MHRSLSLRAVVCLSTLLPASLLYA. At 25–131 the chain is on the periplasmic side; the sequence is APDVDIETLK…EASGFFGNGK (107 aa). Residues 29–64 are a coiled coil; it reads DIETLKQELLELKQRYEAQQKALAVLEQRVRQVEDQ. The interval 62-114 is disordered; it reads EDQPATPAPKRLAKSPADFKQSGSTVAASSGTGGATGGSSYGQSLKDDSEPAQ. Positions 92-101 are enriched in gly residues; it reads GTGGATGGSS. The alpha helical plug stretch occupies residues 113 to 125; that stretch reads AQSVSNLYNEASG. The beta stranded transmembrane segment at 132-142 threads the bilayer; it reads FSFETGITYAR. Residues 143-172 lie on the Extracellular side of the membrane; sequence YDARQLTLNGFLALDSIFLGNINLDRIKAD. Residues 173–183 traverse the membrane as a beta stranded segment; it reads NWTLDLTGRYN. The Periplasmic segment spans residues 184-189; it reads LDNRWQ. A beta stranded membrane pass occupies residues 190-198; the sequence is FDVNVPVVY. The Extracellular portion of the chain corresponds to 199 to 224; the sequence is RESTYQSGGASGGDPQATSEESVSRD. The disordered stretch occupies residues 203–223; sequence YQSGGASGGDPQATSEESVSR. A beta stranded membrane pass occupies residues 225–238; sequence PTIGDVNFGIAYKF. At 239-246 the chain is on the periplasmic side; that stretch reads LDESATMP. A beta stranded membrane pass occupies residues 247-256; it reads DAVVSVRVKA. Residues 257-288 lie on the Extracellular side of the membrane; the sequence is PTGKEPFGIKLVRSTANDNLYVPESLPTGNGV. The beta stranded transmembrane segment at 289-298 threads the bilayer; the sequence is WSITPGLSLV. Residues 299-304 are Periplasmic-facing; it reads KTFDPA. The beta stranded transmembrane segment at 305 to 314 threads the bilayer; that stretch reads VLFGSVSYTH. Residues 315–339 are Extracellular-facing; sequence NLEDSFDDISSDVNQKVGGKVRLGD. A beta stranded transmembrane segment spans residues 340–348; it reads SFQFGVGVA. Residues 349–356 lie on the Periplasmic side of the membrane; that stretch reads FALNERMS. The beta stranded transmembrane segment at 357–365 threads the bilayer; sequence MSFSVSDLI. Residues 366–386 lie on the Extracellular side of the membrane; sequence QRKSKLKPDGGGWQSIVSSDA. The chain crosses the membrane as a beta stranded span at residues 387–397; sequence NAGYFNVGMTI. Residues 398-404 lie on the Periplasmic side of the membrane; it reads AASENLT. A beta stranded membrane pass occupies residues 405 to 412; sequence IVPNLAIG. The Extracellular portion of the chain corresponds to 413-419; sequence MTDDAPD. A beta stranded transmembrane segment spans residues 420–428; the sequence is FTFSLKFPY. Over 429–430 the chain is Periplasmic; the sequence is YF.

This sequence belongs to the amyloid transporter (TC 9.B.153) family. In terms of assembly, homotrimer.

Its subcellular location is the cell outer membrane. Transports fibril components across the outer membrane. Upon overexpression of the endogenous six-gene locus (fapA-fapF) in situ cells form large clumps during liquid growth, make large amounts of biofilm and produce amyloid fibrils. Expression of the 6 gene operon in E.coli strain BL21(DE3) induces flocculation and biofilm formation with copious extracellular fibrils. This chain is Functional amyloid transporter FapF, found in Pseudomonas fluorescens.